The following is a 221-amino-acid chain: Glutathione S-transferase (221 aa).

Methionine 1 is modified (N-acetylmethionine). Alanine 2 carries the post-translational modification N-acetylalanine; in Glutathione S-transferase, N-terminally processed. In terms of domain architecture, GST N-terminal spans 3–82; it reads GEQNIKYFNI…YIAEKYNLLG (80 aa). Glutathione contacts are provided by residues tyrosine 9, lysine 45, 53-54, and 66-67; these read QV and QT. The 125-residue stretch at 84–208 folds into the GST C-terminal domain; that stretch reads DMKEHAQIIM…PGSKRKPVPD (125 aa).

It belongs to the GST superfamily. Alpha family. In terms of assembly, homodimer or heterodimer of GSTA1 and GSTA2.

It localises to the cytoplasm. It catalyses the reaction RX + glutathione = an S-substituted glutathione + a halide anion + H(+). The catalysed reaction is prostaglandin A2 + glutathione = prostaglandin A2-S-(R)-glutathione. It carries out the reaction prostaglandin J2 + glutathione = prostaglandin J2-S-(R)-glutathione. The enzyme catalyses (13S)-hydroperoxy-(9Z,11E)-octadecadienoate + 2 glutathione = (13S)-hydroxy-(9Z,11E)-octadecadienoate + glutathione disulfide + H2O. It catalyses the reaction androst-5-ene-3,17-dione = androst-4-ene-3,17-dione. Its function is as follows. Glutathione S-transferase that catalyzes the nucleophilic attack of the sulfur atom of glutathione on the electrophilic groups of a wide range of exogenous and endogenous compounds. Involved in the formation of glutathione conjugates of both prostaglandin A2 (PGA2) and prostaglandin J2 (PGJ2). It also catalyzes the isomerization of D5-androstene-3,17-dione (AD) into D4-androstene-3,17-dione and may therefore play an important role in hormone biosynthesis. Through its glutathione-dependent peroxidase activity toward the fatty acid hydroperoxide (13S)-hydroperoxy-(9Z,11E)-octadecadienoate/13-HPODE it is also involved in the metabolism of oxidized linoleic acid. This Antechinus stuartii (Brown marsupial mouse) protein is Glutathione S-transferase.